The following is a 376-amino-acid chain: UDP-N-acetylglucosamine--N-acetylmuramyl-(pentapeptide) pyrophosphoryl-undecaprenol N-acetylglucosamine transferase (376 aa).

Residues 11–13, asparagine 117, arginine 160, serine 208, and glutamine 310 each bind UDP-N-acetyl-alpha-D-glucosamine; that span reads TGG.

It belongs to the glycosyltransferase 28 family. MurG subfamily.

The protein localises to the cell inner membrane. The enzyme catalyses di-trans,octa-cis-undecaprenyl diphospho-N-acetyl-alpha-D-muramoyl-L-alanyl-D-glutamyl-meso-2,6-diaminopimeloyl-D-alanyl-D-alanine + UDP-N-acetyl-alpha-D-glucosamine = di-trans,octa-cis-undecaprenyl diphospho-[N-acetyl-alpha-D-glucosaminyl-(1-&gt;4)]-N-acetyl-alpha-D-muramoyl-L-alanyl-D-glutamyl-meso-2,6-diaminopimeloyl-D-alanyl-D-alanine + UDP + H(+). The protein operates within cell wall biogenesis; peptidoglycan biosynthesis. Its function is as follows. Cell wall formation. Catalyzes the transfer of a GlcNAc subunit on undecaprenyl-pyrophosphoryl-MurNAc-pentapeptide (lipid intermediate I) to form undecaprenyl-pyrophosphoryl-MurNAc-(pentapeptide)GlcNAc (lipid intermediate II). This is UDP-N-acetylglucosamine--N-acetylmuramyl-(pentapeptide) pyrophosphoryl-undecaprenol N-acetylglucosamine transferase from Rickettsia massiliae (strain Mtu5).